Here is a 298-residue protein sequence, read N- to C-terminus: UDP-3-O-acyl-N-acetylglucosamine deacetylase (298 aa).

His-80, His-239, and Asp-243 together coordinate Zn(2+). His-266 serves as the catalytic Proton donor.

The protein belongs to the LpxC family. Zn(2+) serves as cofactor.

The catalysed reaction is a UDP-3-O-[(3R)-3-hydroxyacyl]-N-acetyl-alpha-D-glucosamine + H2O = a UDP-3-O-[(3R)-3-hydroxyacyl]-alpha-D-glucosamine + acetate. The protein operates within glycolipid biosynthesis; lipid IV(A) biosynthesis; lipid IV(A) from (3R)-3-hydroxytetradecanoyl-[acyl-carrier-protein] and UDP-N-acetyl-alpha-D-glucosamine: step 2/6. In terms of biological role, catalyzes the hydrolysis of UDP-3-O-myristoyl-N-acetylglucosamine to form UDP-3-O-myristoylglucosamine and acetate, the committed step in lipid A biosynthesis. The protein is UDP-3-O-acyl-N-acetylglucosamine deacetylase of Blochmanniella floridana.